Reading from the N-terminus, the 265-residue chain is Urease accessory protein UreH (265 aa).

Belongs to the UreD family. As to quaternary structure, ureH, UreF and UreG form a complex that acts as a GTP-hydrolysis-dependent molecular chaperone, activating the urease apoprotein by helping to assemble the nickel containing metallocenter of UreC. The UreE protein probably delivers the nickel.

The protein resides in the cytoplasm. Required for maturation of urease via the functional incorporation of the urease nickel metallocenter. This is Urease accessory protein UreH from Helicobacter pylori (strain P12).